Here is a 213-residue protein sequence, read N- to C-terminus: Orotate phosphoribosyltransferase (213 aa).

K26 lines the 5-phospho-alpha-D-ribose 1-diphosphate pocket. Residue 34–35 (FF) coordinates orotate. Residues 72–73 (YK), R98, K99, K102, H104, and 123–131 (DDVISAGTS) contribute to the 5-phospho-alpha-D-ribose 1-diphosphate site. S127 and R155 together coordinate orotate.

This sequence belongs to the purine/pyrimidine phosphoribosyltransferase family. PyrE subfamily. In terms of assembly, homodimer. Mg(2+) serves as cofactor.

It carries out the reaction orotidine 5'-phosphate + diphosphate = orotate + 5-phospho-alpha-D-ribose 1-diphosphate. It participates in pyrimidine metabolism; UMP biosynthesis via de novo pathway; UMP from orotate: step 1/2. Functionally, catalyzes the transfer of a ribosyl phosphate group from 5-phosphoribose 1-diphosphate to orotate, leading to the formation of orotidine monophosphate (OMP). In Laribacter hongkongensis (strain HLHK9), this protein is Orotate phosphoribosyltransferase.